A 418-amino-acid chain; its full sequence is UDP-N-acetylglucosamine 1-carboxyvinyltransferase (418 aa).

Residue 22–23 participates in phosphoenolpyruvate binding; it reads KN. Arginine 91 provides a ligand contact to UDP-N-acetyl-alpha-D-glucosamine. Cysteine 115 (proton donor) is an active-site residue. Cysteine 115 bears the 2-(S-cysteinyl)pyruvic acid O-phosphothioketal mark. Residues aspartate 305 and isoleucine 327 each contribute to the UDP-N-acetyl-alpha-D-glucosamine site.

Belongs to the EPSP synthase family. MurA subfamily.

It localises to the cytoplasm. It catalyses the reaction phosphoenolpyruvate + UDP-N-acetyl-alpha-D-glucosamine = UDP-N-acetyl-3-O-(1-carboxyvinyl)-alpha-D-glucosamine + phosphate. It functions in the pathway cell wall biogenesis; peptidoglycan biosynthesis. Its function is as follows. Cell wall formation. Adds enolpyruvyl to UDP-N-acetylglucosamine. This is UDP-N-acetylglucosamine 1-carboxyvinyltransferase from Aeromonas salmonicida (strain A449).